We begin with the raw amino-acid sequence, 289 residues long: Rhodopsin (289 aa).

Topologically, residues 1 to 7 (YLVSPAA) are extracellular. Residues 8–32 (YAALGAYMFLLILVGFPVNFLTLYV) traverse the membrane as a helical segment. Residues 33–44 (TLDHKKLRTPLN) lie on the Cytoplasmic side of the membrane. The chain crosses the membrane as a helical span at residues 45-67 (YILLNLAVADLFMVLGGFTTTMY). Residues 68-81 (TSMHGYFVLGRLGC) are Extracellular-facing. The cysteines at positions 81 and 158 are disulfide-linked. A helical transmembrane segment spans residues 82–104 (NLEGFFATLGGEIALWSLVVLAI). Positions 105–107 (ERW) match the 'Ionic lock' involved in activated form stabilization motif. At 105–123 (ERWIVVCKPISNFRFTEDH) the chain is on the cytoplasmic side. The chain crosses the membrane as a helical span at residues 124-144 (AIMGLAFSWVMALTCAVPPLV). Residues 145 to 173 (GWSRYIPEGMQCSCGVDYYTRAEGFNTES) are Extracellular-facing. The helical transmembrane segment at 174–195 (FVLYMFTVHFLIPLSVIFFCYG) threads the bilayer. The Cytoplasmic segment spans residues 196-223 (RLLCAVKEAAAAQQESETTQRAEKEVSR). The helical transmembrane segment at 224-245 (MVVLMVIGFLVCWLPYASVAWW) threads the bilayer. Topologically, residues 246 to 257 (IFCNQGSEFGPI) are extracellular. A helical transmembrane segment spans residues 258-279 (FMTLPAFFAKTSAIYNPLIYIC). At K267 the chain carries N6-(retinylidene)lysine. Residues 280–289 (MNKQFRHCMI) lie on the Cytoplasmic side of the membrane.

It belongs to the G-protein coupled receptor 1 family. Opsin subfamily. Post-translationally, phosphorylated on some or all of the serine and threonine residues present in the C-terminal region. Contains one covalently linked retinal chromophore.

Its subcellular location is the membrane. It localises to the cell projection. The protein localises to the cilium. It is found in the photoreceptor outer segment. Functionally, photoreceptor required for image-forming vision at low light intensity. While most salt water fish species use retinal as chromophore, most freshwater fish use 3-dehydroretinal, or a mixture of retinal and 3-dehydroretinal. Light-induced isomerization of 11-cis to all-trans retinal triggers a conformational change that activates signaling via G-proteins. Subsequent receptor phosphorylation mediates displacement of the bound G-protein alpha subunit by arrestin and terminates signaling. The polypeptide is Rhodopsin (rho) (Procottus jeittelesii (Red sculpin)).